A 127-amino-acid chain; its full sequence is Phosphoribosyl-AMP cyclohydrolase (127 aa).

Aspartate 78 is a Mg(2+) binding site. Cysteine 79 serves as a coordination point for Zn(2+). The Mg(2+) site is built by aspartate 80 and aspartate 82. 2 residues coordinate Zn(2+): cysteine 95 and cysteine 102.

This sequence belongs to the PRA-CH family. In terms of assembly, homodimer. Requires Mg(2+) as cofactor. Zn(2+) serves as cofactor.

The protein resides in the cytoplasm. The catalysed reaction is 1-(5-phospho-beta-D-ribosyl)-5'-AMP + H2O = 1-(5-phospho-beta-D-ribosyl)-5-[(5-phospho-beta-D-ribosylamino)methylideneamino]imidazole-4-carboxamide. It functions in the pathway amino-acid biosynthesis; L-histidine biosynthesis; L-histidine from 5-phospho-alpha-D-ribose 1-diphosphate: step 3/9. In terms of biological role, catalyzes the hydrolysis of the adenine ring of phosphoribosyl-AMP. This chain is Phosphoribosyl-AMP cyclohydrolase, found in Salinibacter ruber (strain DSM 13855 / M31).